The sequence spans 1486 residues: Chromosome partition protein MukB (1486 aa).

34–41 (GGNGAGKS) serves as a coordination point for ATP. 3 coiled-coil regions span residues 326–418 (LEAD…QYNQ), 444–480 (LETF…QAYQ), and 509–603 (RHLA…RAPV). Residues 666–783 (PGGSEDQRLN…EVPLFGRAAR (118 aa)) form a flexible hinge region. Coiled coils occupy residues 835-923 (EAEI…AKLE), 977-1115 (EMLS…TAKA), and 1209-1266 (VEAI…QNVS).

This sequence belongs to the SMC family. MukB subfamily. Homodimerization via its hinge domain. Binds to DNA via its C-terminal region. Interacts, and probably forms a ternary complex, with MukE and MukF via its C-terminal region. The complex formation is stimulated by calcium or magnesium. Interacts with tubulin-related protein FtsZ.

Its subcellular location is the cytoplasm. The protein localises to the nucleoid. Functionally, plays a central role in chromosome condensation, segregation and cell cycle progression. Functions as a homodimer, which is essential for chromosome partition. Involved in negative DNA supercoiling in vivo, and by this means organize and compact chromosomes. May achieve or facilitate chromosome segregation by condensation DNA from both sides of a centrally located replisome during cell division. The polypeptide is Chromosome partition protein MukB (Escherichia coli O17:K52:H18 (strain UMN026 / ExPEC)).